A 297-amino-acid chain; its full sequence is Homoserine kinase (297 aa).

Position 82–92 (82–92) interacts with ATP; that stretch reads PVSRGLGSSAA.

This sequence belongs to the GHMP kinase family. Homoserine kinase subfamily.

It is found in the cytoplasm. The enzyme catalyses L-homoserine + ATP = O-phospho-L-homoserine + ADP + H(+). The protein operates within amino-acid biosynthesis; L-threonine biosynthesis; L-threonine from L-aspartate: step 4/5. Catalyzes the ATP-dependent phosphorylation of L-homoserine to L-homoserine phosphate. The protein is Homoserine kinase of Clostridium botulinum (strain Loch Maree / Type A3).